We begin with the raw amino-acid sequence, 863 residues long: DNA mismatch repair protein MutS 2 (863 aa).

626-633 (GPNMSGKS) is a binding site for ATP.

This sequence belongs to the DNA mismatch repair MutS family.

Functionally, this protein is involved in the repair of mismatches in DNA. It is possible that it carries out the mismatch recognition step. This protein has a weak ATPase activity. In Halobacterium salinarum (strain ATCC 700922 / JCM 11081 / NRC-1) (Halobacterium halobium), this protein is DNA mismatch repair protein MutS 2 (mutS2).